We begin with the raw amino-acid sequence, 202 residues long: Inosine triphosphate pyrophosphatase (202 aa).

8–13 (TGNANK) serves as a coordination point for ITP. Residue Glu-55 coordinates Mg(2+). ITP contacts are provided by residues Lys-67, 83–84 (DT), Lys-100, 159–162 (FGWD), Lys-182, and 187–188 (HR).

It belongs to the HAM1 NTPase family. As to quaternary structure, homodimer. The cofactor is Mg(2+). Mn(2+) serves as cofactor.

It is found in the cytoplasm. Its subcellular location is the nucleus. The enzyme catalyses ITP + H2O = IMP + diphosphate + H(+). The catalysed reaction is dITP + H2O = dIMP + diphosphate + H(+). It carries out the reaction XTP + H2O = XMP + diphosphate + H(+). In terms of biological role, pyrophosphatase that hydrolyzes non-canonical purine nucleotides such as inosine triphosphate (ITP), deoxyinosine triphosphate (dITP) or xanthosine 5'-triphosphate (XTP) to their respective monophosphate derivatives. The enzyme does not distinguish between the deoxy- and ribose forms. Probably excludes non-canonical purines from RNA and DNA precursor pools, thus preventing their incorporation into RNA and DNA and avoiding chromosomal lesions. This is Inosine triphosphate pyrophosphatase from Candida albicans (strain SC5314 / ATCC MYA-2876) (Yeast).